The sequence spans 386 residues: MSINPAFLRRITWGSKSLHHQFTRCQVRALSSSVEQTPESTTPALSALRERLANGGPTLSDFLTRNLGEEPYSVDVGTKKNPLPKPKWMKAAVPGGDKYTAIKAKLREMNLHTVCEEAKCPNLGECWSGGETGTATATIMILGDTCTRGCRFCAVKTSRTPPPPDPNEPTNVAEAIVSWGLDYVVLTSVDRDDLPDQGSGHFAKTVQKLKQLKPKMLVEALVPDFQGNSECVQKVATSGLDVFAHNIETVEELQRVVRDHRANFNQSLEVLKMAKTYSPLGVLTKTSVMLGCGETPAQVIETMEKVREAGVDVITFGQYMRPTKRHMAVSEYVTPEAFEKYQKLGMEMGFRYVASGPMVRSSYKAGEFYIKSMIEDDRKKASSSSI.

Positions 115, 120, 126, 146, 150, 153, and 362 each coordinate [4Fe-4S] cluster. In terms of domain architecture, Radical SAM core spans 131–351 (ETGTATATIM…QKLGMEMGFR (221 aa)).

This sequence belongs to the radical SAM superfamily. Lipoyl synthase family. Requires [4Fe-4S] cluster as cofactor.

It localises to the mitochondrion. The catalysed reaction is [[Fe-S] cluster scaffold protein carrying a second [4Fe-4S](2+) cluster] + N(6)-octanoyl-L-lysyl-[protein] + 2 oxidized [2Fe-2S]-[ferredoxin] + 2 S-adenosyl-L-methionine + 4 H(+) = [[Fe-S] cluster scaffold protein] + N(6)-[(R)-dihydrolipoyl]-L-lysyl-[protein] + 4 Fe(3+) + 2 hydrogen sulfide + 2 5'-deoxyadenosine + 2 L-methionine + 2 reduced [2Fe-2S]-[ferredoxin]. The protein operates within protein modification; protein lipoylation via endogenous pathway; protein N(6)-(lipoyl)lysine from octanoyl-[acyl-carrier-protein]: step 2/2. Its function is as follows. Catalyzes the radical-mediated insertion of two sulfur atoms into the C-6 and C-8 positions of the octanoyl moiety bound to the lipoyl domains of lipoate-dependent enzymes, thereby converting the octanoylated domains into lipoylated derivatives. The protein is Lipoyl synthase, mitochondrial of Picea sitchensis (Sitka spruce).